The following is a 105-amino-acid chain: Platelet factor 4 (105 aa).

A signal peptide spans methionine 1–alanine 29. O-linked (GalNAc...) threonine glycosylation occurs at threonine 31. 2 disulfides stabilise this stretch: cysteine 44/cysteine 71 and cysteine 46/cysteine 87. Position 61 is a phosphoserine (serine 61). Lysine 96–isoleucine 102 contributes to the heparin binding site.

It belongs to the intercrine alpha (chemokine CxC) family. Homotetramer. Interacts with TNFAIP6 (via Link domain). Interacts with CCR1. Interacts with CXCR3. Interacts with THBD; this interaction enhances generation of activated protein C.

Its subcellular location is the secreted. Chemokine released during platelet aggregation that plays a role in different biological processes including hematopoiesis, cell proliferation, differentiation, and activation. Acts via different functional receptors including CCR1, CXCR3A or CXCR3B. Upon interaction with CXCR3A receptor, induces activated T-lymphocytes migration mediated via downstream Ras/extracellular signal-regulated kinase (ERK) signaling. Neutralizes the anticoagulant effect of heparin by binding more strongly to heparin than to the chondroitin-4-sulfate chains of the carrier molecule. Plays a role in the inhibition of hematopoiesis and in the maintenance of hematopoietic stem cell (HSC) quiescence. Chemotactic for neutrophils and monocytes via CCR1. Inhibits endothelial cell proliferation. In cooperation with toll-like receptor 8/TLR8, induces chromatin remodeling and activates inflammatory gene expression via the TBK1-IRF5 axis. In addition, induces myofibroblast differentiation and collagen synthesis in different precursor cells, including endothelial cells, by stimulating endothelial-to-mesenchymal transition. Interacts with thrombomodulin/THBD to enhance the activation of protein C and thus potentiates its anticoagulant activity. This chain is Platelet factor 4 (Pf4), found in Mus musculus (Mouse).